The chain runs to 1358 residues: Phosphoinositide 3-kinase regulatory subunit 4 (1358 aa).

Gly2 carries N-myristoyl glycine lipidation. One can recognise a Protein kinase domain in the interval 26–324 (FEYDKSLGST…AFPEIFYTFL (299 aa)). ATP contacts are provided by residues 32–40 (LGSTRFFKV) and Lys53. The Proton acceptor role is filled by Asp148. HEAT repeat units lie at residues 373–411 (NGLV…RLGV), 413–450 (ILLD…LVKE), 458–495 (IYPE…TALR), 531–570 (QALH…FFGR), 572–610 (KAND…YVGW), 612–648 (SSSI…LGLL), and 690–726 (DVYC…PVSR). A phosphoserine mark is found at Ser808, Ser813, Ser853, and Ser865. The tract at residues 875-899 (LPKGSDQEVIQTGKPPRSESSAGIC) is disordered. WD repeat units follow at residues 991–1030 (EHKS…GKTT), 1040–1079 (RVGG…LPKS), 1093–1134 (KEDG…NAWT), 1139–1178 (LKSG…PISS), 1182–1223 (PSRA…RRFT), and 1237–1278 (PSPH…RSYV). A disordered region spans residues 1307 to 1326 (KQKVGPSDDTPRRGPESLPV). Residues 1315 to 1326 (DTPRRGPESLPV) are compositionally biased toward basic and acidic residues. Residue Thr1316 is modified to Phosphothreonine. One copy of the WD 7 repeat lies at 1327-1358 (GHHDIITDVATFQTTQGFIVTASRDGIVKVWK).

The protein belongs to the protein kinase superfamily. Ser/Thr protein kinase family. In terms of assembly, component of the PI3K (PI3KC3/PI3K-III/class III phosphatidylinositol 3-kinase) complex the core of which is composed of the catalytic subunit PIK3C3, the regulatory subunit PIK3R4 and BECN1 associating with additional regulatory/auxiliary subunits to form alternative complex forms. Alternative complex forms containing a fourth regulatory subunit in a mutually exclusive manner are PI3K complex I (PI3KC3-C1) containing ATG14, and PI3K complex II (PI3KC3-C2) containing UVRAG. PI3KC3-C1 displays a V-shaped architecture with PIK3R4 serving as a bridge between PIK3C3 and the ATG14:BECN1 subcomplex. Both, PI3KC3-C1 and PI3KC3-C2, can associate with further regulatory subunits, such as RUBCN, SH3GLB1/Bif-1, AMBRA1 and NRBF2. PI3KC3-C1 probably associates with PIK3CB. Interacts with RAB7A in the presence of PIK3C3/VPS34. Interacts with NRBF2. Interacts with ARMC3. Requires Mn(2+) as cofactor. Myristoylated. In terms of processing, probably autophosphorylated.

The protein localises to the late endosome. The protein resides in the cytoplasmic vesicle. Its subcellular location is the autophagosome. It is found in the membrane. The enzyme catalyses L-seryl-[protein] + ATP = O-phospho-L-seryl-[protein] + ADP + H(+). The catalysed reaction is L-threonyl-[protein] + ATP = O-phospho-L-threonyl-[protein] + ADP + H(+). Regulatory subunit of the PI3K complex that mediates formation of phosphatidylinositol 3-phosphate; different complex forms are believed to play a role in multiple membrane trafficking pathways: PI3KC3-C1 is involved in initiation of autophagosomes and PI3KC3-C2 in maturation of autophagosomes and endocytosis. Involved in regulation of degradative endocytic trafficking and cytokinesis, probably in the context of PI3KC3-C2. In terms of biological role, regulatory subunit of the PI3K complex. May regulate membrane trafficking late in the endocytic pathway. This is Phosphoinositide 3-kinase regulatory subunit 4 (PIK3R4) from Pongo abelii (Sumatran orangutan).